Consider the following 367-residue polypeptide: Peroxidase 1 (367 aa).

The first 33 residues, 1 to 33 (MAKESKLTAGVAAALTVVAACALCLLLPATARA), serve as a signal peptide directing secretion. Gln34 is modified (pyrrolidone carboxylic acid). Cystine bridges form between Cys44-Cys125, Cys77-Cys82, Cys131-Cys335, and Cys209-Cys244. Catalysis depends on His75, which acts as the Proton acceptor. Asp76, Val79, Gly81, Asp83, and Ser85 together coordinate Ca(2+). N-linked (GlcNAc...) asparagine glycosylation occurs at Asn164. Position 172 (Pro172) interacts with substrate. His202 lines the heme b pocket. Thr203 is a Ca(2+) binding site. N-linked (GlcNAc...) asparagine glycosylation is found at Asn218 and Asn247. Ca(2+) is bound by residues Asp259, Thr262, and Asp267. N-linked (GlcNAc...) asparagine glycosylation occurs at Asn303.

This sequence belongs to the peroxidase family. Classical plant (class III) peroxidase subfamily. The cofactor is heme b. Requires Ca(2+) as cofactor. In terms of tissue distribution, expressed in the root tip meristems.

It localises to the secreted. It is found in the vacuole. It catalyses the reaction 2 a phenolic donor + H2O2 = 2 a phenolic radical donor + 2 H2O. In terms of biological role, removal of H(2)O(2), oxidation of toxic reductants, biosynthesis and degradation of lignin, suberization, auxin catabolism, response to environmental stresses such as wounding, pathogen attack and oxidative stress. These functions might be dependent on each isozyme/isoform in each plant tissue. The chain is Peroxidase 1 (PER1) from Zea mays (Maize).